The chain runs to 502 residues: Exodeoxyribonuclease 7 large subunit (502 aa).

The segment covering 474 to 495 (SAPSTTKKSAPKPAAPKAPKTP) has biased composition (low complexity). Residues 474-502 (SAPSTTKKSAPKPAAPKAPKTPGEQGSLF) form a disordered region.

Belongs to the XseA family. In terms of assembly, heterooligomer composed of large and small subunits.

The protein localises to the cytoplasm. The catalysed reaction is Exonucleolytic cleavage in either 5'- to 3'- or 3'- to 5'-direction to yield nucleoside 5'-phosphates.. Its function is as follows. Bidirectionally degrades single-stranded DNA into large acid-insoluble oligonucleotides, which are then degraded further into small acid-soluble oligonucleotides. This chain is Exodeoxyribonuclease 7 large subunit, found in Ruegeria sp. (strain TM1040) (Silicibacter sp.).